The chain runs to 391 residues: Ferrochelatase (391 aa).

Positions 196 and 281 each coordinate Fe cation.

This sequence belongs to the ferrochelatase family.

The protein localises to the cytoplasm. The catalysed reaction is heme b + 2 H(+) = protoporphyrin IX + Fe(2+). It functions in the pathway porphyrin-containing compound metabolism; protoheme biosynthesis; protoheme from protoporphyrin-IX: step 1/1. Its function is as follows. Catalyzes the ferrous insertion into protoporphyrin IX. The chain is Ferrochelatase from Prochlorococcus marinus subsp. pastoris (strain CCMP1986 / NIES-2087 / MED4).